We begin with the raw amino-acid sequence, 89 residues long: Small ribosomal subunit protein uS15 (89 aa).

The protein belongs to the universal ribosomal protein uS15 family. Part of the 30S ribosomal subunit. Forms a bridge to the 50S subunit in the 70S ribosome, contacting the 23S rRNA.

One of the primary rRNA binding proteins, it binds directly to 16S rRNA where it helps nucleate assembly of the platform of the 30S subunit by binding and bridging several RNA helices of the 16S rRNA. Functionally, forms an intersubunit bridge (bridge B4) with the 23S rRNA of the 50S subunit in the ribosome. In Tolumonas auensis (strain DSM 9187 / NBRC 110442 / TA 4), this protein is Small ribosomal subunit protein uS15.